Reading from the N-terminus, the 559-residue chain is Glucose-6-phosphate isomerase 2 (559 aa).

Glutamate 367 functions as the Proton donor in the catalytic mechanism. Active-site residues include histidine 398 and lysine 522.

Belongs to the GPI family.

It localises to the cytoplasm. The catalysed reaction is alpha-D-glucose 6-phosphate = beta-D-fructose 6-phosphate. The protein operates within carbohydrate biosynthesis; gluconeogenesis. Its pathway is carbohydrate degradation; glycolysis; D-glyceraldehyde 3-phosphate and glycerone phosphate from D-glucose: step 2/4. Functionally, catalyzes the reversible isomerization of glucose-6-phosphate to fructose-6-phosphate. This is Glucose-6-phosphate isomerase 2 from Chromohalobacter salexigens (strain ATCC BAA-138 / DSM 3043 / CIP 106854 / NCIMB 13768 / 1H11).